A 213-amino-acid polypeptide reads, in one-letter code: Nicolin-1 (213 aa).

In terms of assembly, part of the neuronal tubulin polyglutamylase complex which contains TPGS1, TPGS2, TTLL1, LRRC49 and NICN1.

Its subcellular location is the nucleus. The sequence is that of Nicolin-1 (NICN1) from Canis lupus familiaris (Dog).